The sequence spans 150 residues: Macrodomain Ter protein (150 aa).

The protein belongs to the MatP family. As to quaternary structure, homodimer.

The protein resides in the cytoplasm. Functionally, required for spatial organization of the terminus region of the chromosome (Ter macrodomain) during the cell cycle. Prevents early segregation of duplicated Ter macrodomains during cell division. Binds specifically to matS, which is a 13 bp signature motif repeated within the Ter macrodomain. The polypeptide is Macrodomain Ter protein (Shigella boydii serotype 18 (strain CDC 3083-94 / BS512)).